We begin with the raw amino-acid sequence, 241 residues long: Uracil-DNA glycosylase (241 aa).

The active-site Proton acceptor is Asp-68.

The protein belongs to the uracil-DNA glycosylase (UDG) superfamily. UNG family.

The protein resides in the cytoplasm. The catalysed reaction is Hydrolyzes single-stranded DNA or mismatched double-stranded DNA and polynucleotides, releasing free uracil.. In terms of biological role, excises uracil residues from the DNA which can arise as a result of misincorporation of dUMP residues by DNA polymerase or due to deamination of cytosine. The protein is Uracil-DNA glycosylase of Sinorhizobium medicae (strain WSM419) (Ensifer medicae).